Consider the following 59-residue polypeptide: Large ribosomal subunit protein uL30 (59 aa).

The protein belongs to the universal ribosomal protein uL30 family. Part of the 50S ribosomal subunit.

The polypeptide is Large ribosomal subunit protein uL30 (Geotalea daltonii (strain DSM 22248 / JCM 15807 / FRC-32) (Geobacter daltonii)).